We begin with the raw amino-acid sequence, 1179 residues long: Putative ankyrin repeat protein RF_0381 (1179 aa).

18 ANK repeats span residues Asn282–Gln311, Asn604–Ala633, His637–Ala666, Asn670–Ala699, Asn703–Ala732, Asn736–Ala765, Ser769–Ala798, Asn802–Asn831, Lys833–Ala860, Ser864–Ala893, Ser897–Ala926, Ser930–Ala959, Ser963–Thr992, Asp996–Ala1025, Ser1029–Ala1058, Asp1062–Ala1091, Ser1095–Thr1124, and Ser1128–Leu1157.

This is Putative ankyrin repeat protein RF_0381 from Rickettsia felis (strain ATCC VR-1525 / URRWXCal2) (Rickettsia azadi).